Consider the following 180-residue polypeptide: Cell wall / vacuolar inhibitor of fructosidase 2 (180 aa).

The N-terminal stretch at 1–23 (MASSLIFLLLVTLTFSASTLISA) is a signal peptide. Asn26 is a glycosylation site (N-linked (GlcNAc...) asparagine). Cys35 and Cys44 are oxidised to a cystine. N-linked (GlcNAc...) asparagine glycosylation is found at Asn73 and Asn84. A disulfide bond links Cys101 and Cys141.

Belongs to the PMEI family. Mostly expressed at low levels in seedlings, stems, leaves and flowers (in all organs), and, to a lower extent, in roots and siliques.

It is found in the vacuole. In terms of biological role, inhibits fructosidases from both cell wall (cell wall invertase CWI) and vacuoles (vacuolar invertase VI). The sequence is that of Cell wall / vacuolar inhibitor of fructosidase 2 (C/VIF2) from Arabidopsis thaliana (Mouse-ear cress).